We begin with the raw amino-acid sequence, 880 residues long: MSDMSLKDLAKDLNKSEEILVKQFADAGIKKSASDKVSLAEKQTLTSFLQKQHGGESKTKMTLQRKTKSTLNVKGSTGQAKAVQVEVRKKRTYVKRSDSETQETQAAELADQQAANDKLQAEIEAKKLLVEKALAEKLAAKKEADEKAKKAAAANKEKQTAVKSEKTAEQIASEKESAALLKKADQEASAKAEKETAQQAADAKKLVEENSARWAEEETARKKAAEGGDYHITSSKEAQAAEDVLDSKAEGPSRRKKKKKAPVEEKFQGRRTRRGKKQRPATPSALQQAFEKPAAPVERNVRIGETITVAELANKMAVKATEVIKAMMKMGAMATINQVIDQETATIVAEEMGHKVILTKENELEEAVMAEAQQGGDRTSRAPVVTIMGHVDHGKTSLLDYIRRAKVADGEAGGITQHIGAYHVETDKGMISFLDTPGHAAFTSMRSRGAKATDIVILVVAADDGVMPQTIEAIQHAKAAKVPLIVAVNKIDKEGADFDRVKSELSQHNIISEEWGGENIFTYVSAKVGTGVDGLLESILLQAEMLDLSAVAKGPAAGVVIESRLDKGRGPVASILVQHGELKLGDILLCGLEYGRVRAMRDENGKPIEVAGPSIPVEVLGLSGVPMAGDEATVVKDEKKAREVALYRQGKFRDIKLARQQKAKLDNMFANMEAGEVSELNIVLKADVQGSLEAICESLNKLSTDEVKVNIIGRGVGGITETDASLASASGAIVIGFNVRADASARKLIENEGVDLHYYSIIYGLIDEVRAAMSGLLAPEYRQEITGIADVREVFKSPKIGAIAGCMVTEGTIKRNNPIRVLRENIVIYEGVLESLRRFRDDLSEVRNGMECGIGVKNYNDVRVGDQIEVFETIEIKRTL.

Disordered stretches follow at residues 51-78 (KQHG…GSTG), 93-116 (YVKR…QAAN), and 142-293 (KEAD…FEKP). Residues 69–78 (STLNVKGSTG) show a composition bias toward polar residues. Basic and acidic residues predominate over residues 142–229 (KEADEKAKKA…ARKKAAEGGD (88 aa)). Positions 269 to 279 (GRRTRRGKKQR) are enriched in basic residues. The region spanning 380–549 (SRAPVVTIMG…LLQAEMLDLS (170 aa)) is the tr-type G domain. Residues 389–396 (GHVDHGKT) form a G1 region. 389–396 (GHVDHGKT) serves as a coordination point for GTP. Residues 414–418 (GITQH) form a G2 region. The segment at 435–438 (DTPG) is G3. Residues 435 to 439 (DTPGH) and 489 to 492 (NKID) each bind GTP. Positions 489 to 492 (NKID) are G4. Residues 525-527 (SAK) form a G5 region.

The protein belongs to the TRAFAC class translation factor GTPase superfamily. Classic translation factor GTPase family. IF-2 subfamily.

Its subcellular location is the cytoplasm. In terms of biological role, one of the essential components for the initiation of protein synthesis. Protects formylmethionyl-tRNA from spontaneous hydrolysis and promotes its binding to the 30S ribosomal subunits. Also involved in the hydrolysis of GTP during the formation of the 70S ribosomal complex. The protein is Translation initiation factor IF-2 of Psychromonas ingrahamii (strain DSM 17664 / CCUG 51855 / 37).